Here is a 144-residue protein sequence, read N- to C-terminus: MNFKYIVAVSFLIASAYARSEENDEQSLSQRDVLEEESLREIRGIGTKILGGVKTALKGALKELASTYANGKRTAEEHEVMKRLEVVMRDLDSLDYPEEASERETRDFNQEEIANLYTKKEKRLLGPVLGLVSNALGGLLKNIG.

An N-terminal signal peptide occupies residues 1 to 18 (MNFKYIVAVSFLIASAYA). A propeptide spanning residues 19 to 43 (RSEENDEQSLSQRDVLEEESLREIR) is cleaved from the precursor. N70 carries the asparagine amide modification. Positions 74–123 (TAEEHEVMKRLEVVMRDLDSLDYPEEASERETRDFNQEEIANLYTKKEKR) are excised as a propeptide. I143 is subject to Isoleucine amide.

Belongs to the bombinin family. As to expression, expressed by the skin glands.

It localises to the secreted. Maximin-1 shows antibacterial activity against both Gram-positive and Gram-negative bacteria. It also shows antimicrobial activity against the fungus C.albicans, but not against A.flavus nor P.uticale. It has little hemolytic activity. It possess a significant cytotoxicity against tumor cell lines. It does not possess a significant anti-HIV activity. It shows high spermicidal activity. Its function is as follows. Maximin-H12 shows antimicrobial activity against bacteria and against the fungus C.albicans. Shows strong hemolytic activity. The protein is Maximins 1/H12 of Bombina maxima (Giant fire-bellied toad).